We begin with the raw amino-acid sequence, 373 residues long: DNA dC-&gt;dU-editing enzyme APOBEC-3F (373 aa).

2 consecutive CMP/dCMP-type deaminase domains span residues Arg29 to Leu137 and Asp174 to Leu321. A (Microbial infection) Glycyl lysine isopeptide (Lys-Gly) (interchain with G-Cter in ubiquitin) cross-link involves residue Lys52. 3 residues coordinate Zn(2+): His65, Cys96, and Cys99. A (Microbial infection) Glycyl lysine isopeptide (Lys-Gly) (interchain with G-Cter in ubiquitin) cross-link involves residue Lys234. His249 is a binding site for Zn(2+). Glu251 acts as the Proton donor in catalysis. Zn(2+) is bound by residues Cys280 and Cys283. A disulfide bridge links Cys280 with Cys283. Residues Lys334, Lys352, Lys355, and Lys358 each participate in a (Microbial infection) Glycyl lysine isopeptide (Lys-Gly) (interchain with G-Cter in ubiquitin) cross-link.

It belongs to the cytidine and deoxycytidylate deaminase family. Homodimer. Interacts with APOBEC3G in an RNA-dependent manner. Interacts with AGO1, AGO2 and AGO3. As to quaternary structure, (Microbial infection) Interacts with HIV-1 Vif, leading to its ubiquitination and degradation by the proteasome. In the absence of Vif protein, specifically packaged into HIV-1 virions. The cofactor is Zn(2+). (Microbial infection) Following infection by HIV-1, ubiquitinated by a cullin-5-RING E3 ubiquitin-protein ligase complex (ECS complex) hijacked by the HIV-1 Vif protein, leading to its degradation. As to expression, widely expressed. Highly expressed in ovary.

The protein localises to the cytoplasm. It localises to the P-body. The enzyme catalyses a 2'-deoxycytidine in single-stranded DNA + H2O + H(+) = a 2'-deoxyuridine in single-stranded DNA + NH4(+). (Microbial infection) Antiviral activity is neutralized by the HIV-1 virion infectivity factor (Vif), that prevents its incorporation into progeny virions by both inhibiting its translation and/or by inducing its ubiquitination and subsequent degradation by the 26S proteasome. Its function is as follows. DNA deaminase (cytidine deaminase) which acts as an inhibitor of retrovirus replication and retrotransposon mobility via deaminase-dependent and -independent mechanisms. Exhibits antiviral activity against viruse such as HIV-1 or HIV-2. After the penetration of retroviral nucleocapsids into target cells of infection and the initiation of reverse transcription, it can induce the conversion of cytosine to uracil in the minus-sense single-strand viral DNA, leading to G-to-A hypermutations in the subsequent plus-strand viral DNA. The resultant detrimental levels of mutations in the proviral genome, along with a deamination-independent mechanism that works prior to the proviral integration, together exert efficient antiretroviral effects in infected target cells. Selectively targets single-stranded DNA and does not deaminate double-stranded DNA or single- or double-stranded RNA. Exhibits antiviral activity also against hepatitis B virus (HBV), equine infectious anemia virus (EIAV), xenotropic MuLV-related virus (XMRV) and simian foamy virus (SFV) and may inhibit the mobility of LTR and non-LTR retrotransposons. May also play a role in the epigenetic regulation of gene expression through the process of active DNA demethylation. The protein is DNA dC-&gt;dU-editing enzyme APOBEC-3F of Homo sapiens (Human).